A 307-amino-acid chain; its full sequence is MTSKIKCALIGSGNIGTDLLYKLLRSDVLEPVWMVGIDPDSDGLAKAKAAGLKVTADGIDGLLPFVEADEIKIAFDATSAYVHAENSRKLNELGVVMIDLTPAAIGPFCVPPVNLEQLDENINNINMVTCGGQATIPMVAAVSQVQAVEYGEIVATVSSRSVGPGTRQNIDEFTRTTAGAVEQIGGAEKGKAIIVINPAEPPLLMRDTIHCLTKDQPDEQAITASVHKMIEQVQQYVPGYTLKNGPVFDGRKVTIFLEVEGLGDYLPKYAGNLDIMTAAAARTAEMLASKMLNVKTHLNVTKEAALA.

12–15 (SGNI) lines the NAD(+) pocket. The Acyl-thioester intermediate role is filled by Cys-130. NAD(+) is bound by residues 161–169 (SVGPGTRQN) and Asn-272.

This sequence belongs to the acetaldehyde dehydrogenase family.

It carries out the reaction acetaldehyde + NAD(+) + CoA = acetyl-CoA + NADH + H(+). The chain is Acetaldehyde dehydrogenase from Shewanella pealeana (strain ATCC 700345 / ANG-SQ1).